A 189-amino-acid chain; its full sequence is Crossover junction endodeoxyribonuclease RuvC (189 aa).

Active-site residues include aspartate 7, glutamate 68, and aspartate 141. Aspartate 7, glutamate 68, and aspartate 141 together coordinate Mg(2+).

The protein belongs to the RuvC family. Homodimer which binds Holliday junction (HJ) DNA. The HJ becomes 2-fold symmetrical on binding to RuvC with unstacked arms; it has a different conformation from HJ DNA in complex with RuvA. In the full resolvosome a probable DNA-RuvA(4)-RuvB(12)-RuvC(2) complex forms which resolves the HJ. It depends on Mg(2+) as a cofactor.

Its subcellular location is the cytoplasm. The enzyme catalyses Endonucleolytic cleavage at a junction such as a reciprocal single-stranded crossover between two homologous DNA duplexes (Holliday junction).. Functionally, the RuvA-RuvB-RuvC complex processes Holliday junction (HJ) DNA during genetic recombination and DNA repair. Endonuclease that resolves HJ intermediates. Cleaves cruciform DNA by making single-stranded nicks across the HJ at symmetrical positions within the homologous arms, yielding a 5'-phosphate and a 3'-hydroxyl group; requires a central core of homology in the junction. The consensus cleavage sequence is 5'-(A/T)TT(C/G)-3'. Cleavage occurs on the 3'-side of the TT dinucleotide at the point of strand exchange. HJ branch migration catalyzed by RuvA-RuvB allows RuvC to scan DNA until it finds its consensus sequence, where it cleaves and resolves the cruciform DNA. The chain is Crossover junction endodeoxyribonuclease RuvC from Rhodococcus opacus (strain B4).